The chain runs to 160 residues: Cytochrome c-type biogenesis protein CcmE (160 aa).

Over 1-8 (MSAPRKTR) the chain is Cytoplasmic. A helical; Signal-anchor for type II membrane protein membrane pass occupies residues 9–29 (LYAILAVICGAVLTVALTLYA). Over 30–160 (LSSNIDLFYT…PAAVTEGKRL (131 aa)) the chain is Periplasmic. Residues His130 and Tyr134 each contribute to the heme site.

The protein belongs to the CcmE/CycJ family.

Its subcellular location is the cell inner membrane. Heme chaperone required for the biogenesis of c-type cytochromes. Transiently binds heme delivered by CcmC and transfers the heme to apo-cytochromes in a process facilitated by CcmF and CcmH. This Pectobacterium carotovorum subsp. carotovorum (strain PC1) protein is Cytochrome c-type biogenesis protein CcmE.